Reading from the N-terminus, the 205-residue chain is Ribonuclease HII (205 aa).

Residues 16–205 (VSEVGIDEVG…KSFLKKSNLF (190 aa)) form the RNase H type-2 domain. Residues Asp22, Glu23, and Asp118 each coordinate a divalent metal cation.

It belongs to the RNase HII family. Mn(2+) is required as a cofactor. Requires Mg(2+) as cofactor.

It is found in the cytoplasm. The enzyme catalyses Endonucleolytic cleavage to 5'-phosphomonoester.. Functionally, endonuclease that specifically degrades the RNA of RNA-DNA hybrids. In Prochlorococcus marinus (strain MIT 9215), this protein is Ribonuclease HII.